We begin with the raw amino-acid sequence, 374 residues long: Chaperone protein DnaJ (374 aa).

One can recognise a J domain in the interval 5–70 (DYYEVLGLEK…DKKANYDRFG (66 aa)). The CR-type zinc finger occupies 137–219 (GVEKSINITR…CHGAGHVRKK (83 aa)). Cys-150, Cys-153, Cys-167, Cys-170, Cys-193, Cys-196, Cys-207, and Cys-210 together coordinate Zn(2+). CXXCXGXG motif repeat units lie at residues 150–157 (CETCGGTG), 167–174 (CDKCGGTG), 193–200 (CDKCGGRG), and 207–214 (CHECHGAG).

This sequence belongs to the DnaJ family. Homodimer. Zn(2+) serves as cofactor.

Its subcellular location is the cytoplasm. Participates actively in the response to hyperosmotic and heat shock by preventing the aggregation of stress-denatured proteins and by disaggregating proteins, also in an autonomous, DnaK-independent fashion. Unfolded proteins bind initially to DnaJ; upon interaction with the DnaJ-bound protein, DnaK hydrolyzes its bound ATP, resulting in the formation of a stable complex. GrpE releases ADP from DnaK; ATP binding to DnaK triggers the release of the substrate protein, thus completing the reaction cycle. Several rounds of ATP-dependent interactions between DnaJ, DnaK and GrpE are required for fully efficient folding. Also involved, together with DnaK and GrpE, in the DNA replication of plasmids through activation of initiation proteins. The sequence is that of Chaperone protein DnaJ from Clostridium acetobutylicum (strain ATCC 824 / DSM 792 / JCM 1419 / IAM 19013 / LMG 5710 / NBRC 13948 / NRRL B-527 / VKM B-1787 / 2291 / W).